The primary structure comprises 54 residues: Large ribosomal subunit protein bL33B (54 aa).

Belongs to the bacterial ribosomal protein bL33 family.

The protein is Large ribosomal subunit protein bL33B of Mycobacterium sp. (strain JLS).